The chain runs to 841 residues: Envelope glycoprotein H (841 aa).

The N-terminal stretch at 1-17 is a signal peptide; it reads MFALVLAVVILPLWTTA. 3 N-linked (GlcNAc...) asparagine; by host glycosylation sites follow: N18, N45, and N217. Topologically, residues 18–802 are virion surface; sequence NKSYVTPTPA…ERRQAIRMSG (785 aa). An interaction with gL region spans residues 246-309; sequence DSGRVEVNIG…DPGPSYRVYL (64 aa). N-linked (GlcNAc...) asparagine; by host glycans are attached at residues N317, N499, N522, N760, and N783. Residues 803-823 traverse the membrane as a helical segment; it reads QYLGASLGGAFLAVVGFGIIG. The Intravirion segment spans residues 824–841; it reads WMLCGNSRLREYNKIPLT.

Belongs to the herpesviridae glycoprotein H family. As to quaternary structure, interacts with glycoprotein L (gL); this interaction is necessary for the correct processing and cell surface expression of gH. The heterodimer gH/gL seems to interact with gB trimers during fusion. N-glycosylated, O-glycosylated, and sialylated.

It localises to the virion membrane. The protein localises to the host cell membrane. It is found in the host endosome membrane. Functionally, the heterodimer glycoprotein H-glycoprotein L is required for the fusion of viral and plasma membranes leading to virus entry into the host cell. Following initial binding to host receptor, membrane fusion is mediated by the fusion machinery composed of gB and the heterodimer gH/gL. May also be involved in the fusion between the virion envelope and the outer nuclear membrane during virion morphogenesis. The protein is Envelope glycoprotein H of Varicella-zoster virus (strain Oka vaccine) (HHV-3).